The following is a 192-amino-acid chain: Probable Brix domain-containing ribosomal biogenesis protein (192 aa).

The Brix domain occupies 2–191 (RPAAITTSQR…DFRTKDERMK (190 aa)).

Its function is as follows. Probably involved in the biogenesis of the ribosome. In Methanopyrus kandleri (strain AV19 / DSM 6324 / JCM 9639 / NBRC 100938), this protein is Probable Brix domain-containing ribosomal biogenesis protein.